The chain runs to 254 residues: Phosphorelay intermediate protein rdeA (254 aa).

Residues 26-123 (EKEFTFELLD…KILSDFKKNW (98 aa)) form the HPt domain. His65 carries the phosphohistidine modification. Residues 124-254 (DKNHGEGGSD…SNSPTKIQTK (131 aa)) form a disordered region. Acidic residues predominate over residues 131 to 143 (GSDDGGDDNESEP). A compositionally biased stretch (low complexity) spans 146 to 160 (NNNNDGSSVNNNDSS). The span at 166 to 186 (KDIENKNTDENTGKNLNERSK) shows a compositional bias: basic and acidic residues. Residues 220–238 (NNTNSSSNNNSKNENGLNS) show a composition bias toward low complexity. The segment covering 239–254 (KQPQTSSNSPTKIQTK) has biased composition (polar residues).

In terms of processing, the phosphorelay mechanism involves the sequential transfer of a phosphate group from 'Asp-212' of pde2 to His-65 of rdeA. In vitro, dephosphorylated by dokA.

Its subcellular location is the cytoplasm. In terms of biological role, phosphorelay protein that supplies phosphate to regA or accepts phosphate from regA; depending on the relative concentration of the phosphodonor proteins. In vitro, acts as a substrate for cheA (bacterial kinase). Plays a role in the development. ypd1 (yeast) can complement rdeA defect. This chain is Phosphorelay intermediate protein rdeA (rdeA), found in Dictyostelium discoideum (Social amoeba).